Here is a 200-residue protein sequence, read N- to C-terminus: MLRIGLTGGIGSGKSTVADLLSSEGFLIVDADQVARDIVEPGQPALAELAEAFGQDILKPDGTLDRAGLAAKAFVSEEQTALLNAITHPRIAEESARRFNEAEDQGAKVAVYDMPLLVEKGLDRKMDLVVVVDVDVEERVRRLVEKRGLTEDDVRRRIASQVPDDVRLKAADIVVDNNGTLEDLHAEASKLIAEILSRVN.

A DPCK domain is found at 3–200 (RIGLTGGIGS…LIAEILSRVN (198 aa)). 11–16 (GSGKST) lines the ATP pocket.

Belongs to the CoaE family.

It localises to the cytoplasm. It carries out the reaction 3'-dephospho-CoA + ATP = ADP + CoA + H(+). It functions in the pathway cofactor biosynthesis; coenzyme A biosynthesis; CoA from (R)-pantothenate: step 5/5. Its function is as follows. Catalyzes the phosphorylation of the 3'-hydroxyl group of dephosphocoenzyme A to form coenzyme A. This is Dephospho-CoA kinase from Corynebacterium glutamicum (strain ATCC 13032 / DSM 20300 / JCM 1318 / BCRC 11384 / CCUG 27702 / LMG 3730 / NBRC 12168 / NCIMB 10025 / NRRL B-2784 / 534).